The following is a 372-amino-acid chain: NAD(P)H-quinone oxidoreductase subunit 1 (372 aa).

A run of 8 helical transmembrane segments spans residues Trp29–Val49, Leu97–Val117, Leu128–Met148, Leu176–Val196, Ile204–Leu224, Phe254–Val274, Thr308–Leu328, and Val351–Gly371.

The protein belongs to the complex I subunit 1 family. In terms of assembly, NDH-1 is composed of at least 11 different subunits.

It localises to the cellular thylakoid membrane. The catalysed reaction is a plastoquinone + NADH + (n+1) H(+)(in) = a plastoquinol + NAD(+) + n H(+)(out). The enzyme catalyses a plastoquinone + NADPH + (n+1) H(+)(in) = a plastoquinol + NADP(+) + n H(+)(out). NDH-1 shuttles electrons from an unknown electron donor, via FMN and iron-sulfur (Fe-S) centers, to quinones in the respiratory and/or the photosynthetic chain. The immediate electron acceptor for the enzyme in this species is believed to be plastoquinone. Couples the redox reaction to proton translocation, and thus conserves the redox energy in a proton gradient. This is NAD(P)H-quinone oxidoreductase subunit 1 from Trichodesmium erythraeum (strain IMS101).